The primary structure comprises 207 residues: ATP-dependent Clp protease proteolytic subunit (207 aa).

The Nucleophile role is filled by S111. H136 is a catalytic residue.

It belongs to the peptidase S14 family. In terms of assembly, fourteen ClpP subunits assemble into 2 heptameric rings which stack back to back to give a disk-like structure with a central cavity, resembling the structure of eukaryotic proteasomes. Component of the ClpAP and ClpXP complexes.

The protein localises to the cytoplasm. It catalyses the reaction Hydrolysis of proteins to small peptides in the presence of ATP and magnesium. alpha-casein is the usual test substrate. In the absence of ATP, only oligopeptides shorter than five residues are hydrolyzed (such as succinyl-Leu-Tyr-|-NHMec, and Leu-Tyr-Leu-|-Tyr-Trp, in which cleavage of the -Tyr-|-Leu- and -Tyr-|-Trp bonds also occurs).. Cleaves peptides in various proteins in a process that requires ATP hydrolysis. Has a chymotrypsin-like activity. Plays a major role in the degradation of misfolded proteins. The chain is ATP-dependent Clp protease proteolytic subunit from Escherichia coli O139:H28 (strain E24377A / ETEC).